Here is a 479-residue protein sequence, read N- to C-terminus: MTAKTLYDKLWEMHEVTRRDDGSSLIYIDRHILHEVTSPQAFEGLRLAGRKPWRIDANIATPDHNVPTTRAERQGGLESISDEVSRLQVQTLDENCDDFGILEFKMNDTRQGIVHVVGPEQGATLPGMTVVCGDSHTSTHGAFGALAHGIGTSEVEHVLATQCLIAKKMKNLQVRVEGTLPFGVTAKDIVLAVIGKIGTAGGNGHALEFAGSAIRALSMEGRMTICNMSIEAGARVGMVAVDEKTIAYVKGRPFAPKGADWDAAVALWRTLVSDADASFDTVVELRAEDIKPQVSWGTSPEMVVAIDQQVPDPAAEQDPTKRDSIQRALKYMGLRANQPITEIHLDRVFIGSCTNSRIEDLRAAAAVAKGRKVASTIKQALVVPGSGLVKAQAEAEGLDKIFLDAGFEWREPGCSMCLAMNPDKLGSGEHCASTSNRNFEGRQGAGGRTHLVSPAMAAAAAVSGHFVDVRELQGIETRE.

Cys353, Cys414, and Cys417 together coordinate [4Fe-4S] cluster.

This sequence belongs to the aconitase/IPM isomerase family. LeuC type 1 subfamily. As to quaternary structure, heterodimer of LeuC and LeuD. The cofactor is [4Fe-4S] cluster.

The catalysed reaction is (2R,3S)-3-isopropylmalate = (2S)-2-isopropylmalate. Its pathway is amino-acid biosynthesis; L-leucine biosynthesis; L-leucine from 3-methyl-2-oxobutanoate: step 2/4. Its function is as follows. Catalyzes the isomerization between 2-isopropylmalate and 3-isopropylmalate, via the formation of 2-isopropylmaleate. The sequence is that of 3-isopropylmalate dehydratase large subunit from Xanthomonas campestris pv. campestris (strain 8004).